The chain runs to 81 residues: Sulfur carrier protein TusA (81 aa).

Cysteine 19 functions as the Cysteine persulfide intermediate in the catalytic mechanism.

It belongs to the sulfur carrier protein TusA family. In terms of assembly, interacts with IscS.

It localises to the cytoplasm. It functions in the pathway tRNA modification. Functionally, sulfur carrier protein involved in sulfur trafficking in the cell. Part of a sulfur-relay system required for 2-thiolation during synthesis of 2-thiouridine of the modified wobble base 5-methylaminomethyl-2-thiouridine (mnm(5)s(2)U) in tRNA. Interacts with IscS and stimulates its cysteine desulfurase activity. Accepts an activated sulfur from IscS, which is then transferred to TusD, and thus determines the direction of sulfur flow from IscS to 2-thiouridine formation. Also appears to be involved in sulfur transfer for the biosynthesis of molybdopterin. This is Sulfur carrier protein TusA from Serratia proteamaculans (strain 568).